The sequence spans 1461 residues: Periaxin (1461 aa).

Phosphoserine is present on S7. In terms of domain architecture, PDZ spans 16 to 99 (LVEIIVETEA…YKVSFCLKRT (84 aa)). A Nuclear export signal motif is present at residues 70–84 (VFFENFKYEDALRLL). A Nuclear localization signal motif is present at residues 118-196 (KGPRAKVAKL…RLQLPRLRVR (79 aa)). Position 133 is a phosphoserine (S133). Repeat copies occupy residues 431 to 435 (GPEVK), 439 to 443 (GPEVK), 447 to 451 (APEVK), 455 to 459 (VPEAA), 463 to 467 (VRLPE), 468 to 472 (VELPK), 473 to 477 (VSEMK), 481 to 485 (VPEMA), 486 to 490 (VPEVR), 494 to 498 (VELPK), 499 to 503 (VSEMK), 507 to 511 (VPEMA), 512 to 516 (VPEVR), 520 to 524 (VQLLK), 525 to 529 (VSEMK), 533 to 537 (VPEMA), 538 to 542 (VPEVR), 546 to 550 (VQLPK), 551 to 555 (VSEMK), 559 to 563 (VSEVA), 564 to 568 (VPEVR), 572 to 576 (VQLPK), 577 to 581 (VPEMK), 582 to 586 (VPEMK), 590 to 594 (VPEMK), 595 to 599 (LPEMK), 600 to 604 (LPEVQ), 608 to 612 (VPEMA), 613 to 617 (VPDVH), 618 to 622 (LPEVQ), 626 to 630 (VPEMK), 631 to 635 (LPEMK), 636 to 640 (LPEVK), 644 to 648 (VPEMA), 649 to 653 (VPDVH), 654 to 658 (LPEVQ), 662 to 666 (VPEMK), 670 to 674 (MPEMA), 675 to 679 (VPEVR), 683 to 687 (VQLPK), 688 to 692 (VSEMK), 696 to 700 (VPEMA), 701 to 705 (VPDVH), 706 to 710 (LPEVQ), 714 to 718 (VCEMK), 719 to 723 (VPDMK), 724 to 728 (LPEIK), 732 to 736 (VPEMA), 737 to 741 (VPDVH), 742 to 746 (LPEVQ), 750 to 754 (VSEIR), 755 to 759 (LPEMQ), 760 to 764 (VPKVP), 771 to 775 (APEVK), and 779 to 783 (APEVQ). The interval 431–783 (GPEVKVPKGP…VKLPRAPEVQ (353 aa)) is 55 X 5 AA approximate tandem repeats of [LVMAG]-[PSREQC]-[EDKL]-[LIVMAP]-[AQKHRPE]; that may have a tripeptide spacer of [LV]-P-[KER]. 2 positions are modified to phosphoserine: S900 and S1082. Residues 1318-1327 (EGAEEGEKAK) are compositionally biased toward basic and acidic residues. The segment at 1318–1461 (EGAEEGEKAK…RMEGAQAAAV (144 aa)) is disordered. S1349, S1351, S1363, S1401, S1407, and S1439 each carry phosphoserine. A compositionally biased stretch (acidic residues) spans 1352–1363 (PEEEEEEEEEGS).

This sequence belongs to the periaxin family. As to quaternary structure, homodimer (via PDZ domain). Interacts with SCN10A. Found in a complex with SCN10A. Interacts with DRP2. Identified in a dystroglycan complex that contains at least PRX, DRP2, UTRN, DMD and DAG1. Detected in a complex composed of at least EZR, AHNAK, PPL and PRX. Identified in a complex with EZR, AHNAK, BFSP1, BFSP2, ANK2, PLEC, VIM and spectrin. As to expression, detected in spinal cord. Isoform 1 and isoform 2 are found in sciatic nerve and Schwann cells.

It is found in the cell membrane. The protein resides in the nucleus. Its subcellular location is the cytoplasm. The protein localises to the cell junction. Its function is as follows. Scaffolding protein that functions as part of a dystroglycan complex in Schwann cells, and as part of EZR and AHNAK-containing complexes in eye lens fiber cells. Required for the maintenance of the peripheral myelin sheath that is essential for normal transmission of nerve impulses and normal perception of sensory stimuli. Required for normal transport of MBP mRNA from the perinuclear to the paranodal regions. Required for normal remyelination after nerve injury. Required for normal elongation of Schwann cells and normal length of the internodes between the nodes of Ranvier. The demyelinated nodes of Ranvier permit saltatory transmission of nerve impulses; shorter internodes cause slower transmission of nerve impulses. Required for the formation of appositions between the abaxonal surface of the myelin sheath and the Schwann cell plasma membrane; the Schwann cell cytoplasm is restricted to regions between these appositions. Required for the formation of Cajal bands and of Schmidt-Lanterman incisures that correspond to short, cytoplasm-filled regions on myelinated nerves. Recruits DRP2 to the Schwann cell plasma membrane. Required for normal protein composition of the eye lens fiber cell plasma membrane and normal eye lens fiber cell morphology. The sequence is that of Periaxin (PRX) from Homo sapiens (Human).